The sequence spans 74 residues: UPF0346 protein RBAM_019500 (74 aa).

It belongs to the UPF0346 family.

This chain is UPF0346 protein RBAM_019500, found in Bacillus velezensis (strain DSM 23117 / BGSC 10A6 / LMG 26770 / FZB42) (Bacillus amyloliquefaciens subsp. plantarum).